The chain runs to 164 residues: MTDTQVTWLTQESHDRLKAELDQLIANRPVIAAEINERREEGDLRENGGYHAAREEQGQQEARIRQLQELLNNAKVGEAPTQSGVALPGSVVKVYYDGDKGDTETFLIATRQEGVKDGKLEVYSPSSPLGGALIDAKVGETRSYTVPNGTEVQVTLVSAEPYHE.

A coiled-coil region spans residues 50-76; that stretch reads YHAAREEQGQQEARIRQLQELLNNAKV.

This sequence belongs to the GreA/GreB family.

Necessary for efficient RNA polymerase transcription elongation past template-encoded arresting sites. The arresting sites in DNA have the property of trapping a certain fraction of elongating RNA polymerases that pass through, resulting in locked ternary complexes. Cleavage of the nascent transcript by cleavage factors such as GreA or GreB allows the resumption of elongation from the new 3'terminus. GreA releases sequences of 2 to 3 nucleotides. In Mycobacteroides abscessus (strain ATCC 19977 / DSM 44196 / CCUG 20993 / CIP 104536 / JCM 13569 / NCTC 13031 / TMC 1543 / L948) (Mycobacterium abscessus), this protein is Transcription elongation factor GreA.